The chain runs to 425 residues: tRNA(Ile)-lysidine synthase (425 aa).

27–32 (SGGLDS) serves as a coordination point for ATP.

It belongs to the tRNA(Ile)-lysidine synthase family.

It is found in the cytoplasm. The enzyme catalyses cytidine(34) in tRNA(Ile2) + L-lysine + ATP = lysidine(34) in tRNA(Ile2) + AMP + diphosphate + H(+). In terms of biological role, ligates lysine onto the cytidine present at position 34 of the AUA codon-specific tRNA(Ile) that contains the anticodon CAU, in an ATP-dependent manner. Cytidine is converted to lysidine, thus changing the amino acid specificity of the tRNA from methionine to isoleucine. The sequence is that of tRNA(Ile)-lysidine synthase from Streptococcus pneumoniae serotype 2 (strain D39 / NCTC 7466).